Consider the following 1064-residue polypeptide: Importin-13 homolog A (1064 aa).

The Importin N-terminal domain occupies 40–109; the sequence is ALPQIQQWLI…LDNLLLFLKT (70 aa). Disordered stretches follow at residues 695–722 and 839–860; these read TTQQ…NNNN and NNKK…NENN. Low complexity predominate over residues 700 to 722; it reads NNNNNNNNNNNNNNNNNNNNNNN.

The protein belongs to the importin beta family. As to quaternary structure, forms a complex with an importin alpha subunit.

Its subcellular location is the cytoplasm. It localises to the nucleus envelope. Functionally, required for nuclear protein import and mediates docking of import substrate to distinct nucleoporins. This is Importin-13 homolog A (ipo13A) from Dictyostelium discoideum (Social amoeba).